A 419-amino-acid chain; its full sequence is Oligouridylate-binding protein 1B (419 aa).

RRM domains are found at residues 54-128 and 139-217; these read RSVY…WAYA and FNIF…WATK. A disordered region spans residues 217–257; it reads KGATSGEDKQSSDSKSVVELTSGVSEDGKDTTNGEAPENNA. S241 is subject to Phosphoserine. Residues 260 to 335 enclose the RRM 3 domain; it reads TTVYVGNLAP…RQMKCSWGSK (76 aa).

Interacts with UBA1A and UBA2A.

It is found in the nucleus. Functionally, heterogeneous nuclear ribonucleoprotein (hnRNP)-like protein that acts as a component of the pre-mRNA processing machinery. Functions to facilitate the nuclear maturation of plant pre-mRNAs. This Arabidopsis thaliana (Mouse-ear cress) protein is Oligouridylate-binding protein 1B (UBP1B).